The sequence spans 291 residues: MAAEEHALTSTEYIKHHLTNMTYGKMPDGTWKLAETAEEAHSMGFTAIHLDSMGWSIGLGVIFCLLFWIVARAANAGVPTKFQSAIEMIIEFVDSSVRDTFHGKSRLIAPLALTIFVWIFLMNLMDLIPVDWIPQVAAFVGANVFGMDPHHVYFKIVPSTDPNITLGMSLSVFVLILFYSIREKGVGGFVGELALNPFNPSNPVAKALLIPVNLILELVTFLARPISLALRLFGNMYAGELIFILIALLPFWIQWALSVPWAIFHILVITLQAFIFMMLTIVYLSMASEKH.

The next 7 helical transmembrane spans lie at 50–70, 108–128, 129–149, 161–181, 203–223, 241–261, and 262–282; these read LDSM…FWIV, IAPL…MDLI, PVDW…GMDP, DPNI…FYSI, PVAK…TFLA, LIFI…SVPW, and AIFH…LTIV.

The protein belongs to the ATPase A chain family. In terms of assembly, F-type ATPases have 2 components, CF(1) - the catalytic core - and CF(0) - the membrane proton channel. CF(1) has five subunits: alpha(3), beta(3), gamma(1), delta(1), epsilon(1). CF(0) has three main subunits: a(1), b(2) and c(9-12). The alpha and beta chains form an alternating ring which encloses part of the gamma chain. CF(1) is attached to CF(0) by a central stalk formed by the gamma and epsilon chains, while a peripheral stalk is formed by the delta and b chains.

It localises to the cell inner membrane. Functionally, key component of the proton channel; it plays a direct role in the translocation of protons across the membrane. This Acinetobacter baumannii (strain AB307-0294) protein is ATP synthase subunit a.